The sequence spans 424 residues: UPF0597 protein Sbal223_1296 (424 aa).

Belongs to the UPF0597 family.

The polypeptide is UPF0597 protein Sbal223_1296 (Shewanella baltica (strain OS223)).